We begin with the raw amino-acid sequence, 275 residues long: Large ribosomal subunit protein uL2 (275 aa).

The interval 223–275 (VAMNPVDHPHGGGEGRTGEAREPVSPWGTPSKGFKTRRNKRTNNMIVQRRKRK) is disordered. Basic and acidic residues predominate over residues 229–244 (DHPHGGGEGRTGEARE).

It belongs to the universal ribosomal protein uL2 family. As to quaternary structure, part of the 50S ribosomal subunit. Forms a bridge to the 30S subunit in the 70S ribosome.

Its function is as follows. One of the primary rRNA binding proteins. Required for association of the 30S and 50S subunits to form the 70S ribosome, for tRNA binding and peptide bond formation. It has been suggested to have peptidyltransferase activity; this is somewhat controversial. Makes several contacts with the 16S rRNA in the 70S ribosome. This Bordetella petrii (strain ATCC BAA-461 / DSM 12804 / CCUG 43448) protein is Large ribosomal subunit protein uL2.